The sequence spans 343 residues: 3-hydroxy-3-methylglutaryl-CoA lyase, cytoplasmic (343 aa).

The N-myristoyl glycine moiety is linked to residue glycine 2. One can recognise a Pyruvate carboxyltransferase domain in the interval valine 48 to methionine 315. Arginine 56 is a substrate binding site. A divalent metal cation-binding residues include aspartate 57, histidine 248, and histidine 250. Cysteine 281 is an active-site residue. An a divalent metal cation-binding site is contributed by asparagine 290.

The protein belongs to the HMG-CoA lyase family. A divalent metal cation is required as a cofactor.

It is found in the cytoplasm. It localises to the cytosol. The protein localises to the endoplasmic reticulum membrane. The catalysed reaction is (3S)-3-hydroxy-3-methylglutaryl-CoA = acetoacetate + acetyl-CoA. Its pathway is metabolic intermediate metabolism; (S)-3-hydroxy-3-methylglutaryl-CoA degradation; acetoacetate from (S)-3-hydroxy-3-methylglutaryl-CoA: step 1/1. In terms of biological role, non-mitochondrial 3-hydroxy-3-methylglutaryl-CoA lyase that catalyzes a cation-dependent cleavage of (S)-3-hydroxy-3-methylglutaryl-CoA into acetyl-CoA and acetoacetate, a key step in ketogenesis, the products of which support energy production in nonhepatic animal tissues. This is 3-hydroxy-3-methylglutaryl-CoA lyase, cytoplasmic (Hmgcll1) from Mus musculus (Mouse).